The chain runs to 703 residues: Elongation factor G (703 aa).

The 283-residue stretch at 8 to 290 (ARYRNIGICA…AVIEYLPAPT (283 aa)) folds into the tr-type G domain. Residues 17 to 24 (AHVDAGKT), 88 to 92 (DTPGH), and 142 to 145 (NKMD) each bind GTP.

It belongs to the TRAFAC class translation factor GTPase superfamily. Classic translation factor GTPase family. EF-G/EF-2 subfamily.

The protein resides in the cytoplasm. Its function is as follows. Catalyzes the GTP-dependent ribosomal translocation step during translation elongation. During this step, the ribosome changes from the pre-translocational (PRE) to the post-translocational (POST) state as the newly formed A-site-bound peptidyl-tRNA and P-site-bound deacylated tRNA move to the P and E sites, respectively. Catalyzes the coordinated movement of the two tRNA molecules, the mRNA and conformational changes in the ribosome. This chain is Elongation factor G, found in Teredinibacter turnerae (strain ATCC 39867 / T7901).